Reading from the N-terminus, the 378-residue chain is tRNA-specific 2-thiouridylase MnmA (378 aa).

ATP is bound by residues 14–21 (AMSGGVDS) and L40. C109 acts as the Nucleophile in catalysis. An intrachain disulfide couples C109 to C208. G133 is an ATP binding site. Positions 156 to 158 (KDQ) are interaction with tRNA. C208 serves as the catalytic Cysteine persulfide intermediate.

This sequence belongs to the MnmA/TRMU family.

Its subcellular location is the cytoplasm. It catalyses the reaction S-sulfanyl-L-cysteinyl-[protein] + uridine(34) in tRNA + AH2 + ATP = 2-thiouridine(34) in tRNA + L-cysteinyl-[protein] + A + AMP + diphosphate + H(+). Its function is as follows. Catalyzes the 2-thiolation of uridine at the wobble position (U34) of tRNA, leading to the formation of s(2)U34. This Streptomyces griseus subsp. griseus (strain JCM 4626 / CBS 651.72 / NBRC 13350 / KCC S-0626 / ISP 5235) protein is tRNA-specific 2-thiouridylase MnmA.